Reading from the N-terminus, the 588-residue chain is Succinate dehydrogenase flavoprotein subunit (588 aa).

Residues 14–19, 37–52, and D221 contribute to the FAD site; these read GAGGAG and SKVFPTRSHTVSAQGG. Residue H45 is modified to Tele-8alpha-FAD histidine. Substrate-binding residues include H242 and T254. Catalysis depends on R286, which acts as the Proton acceptor. H354 provides a ligand contact to substrate. E388 contacts FAD. R399 is a substrate binding site. 404-405 contacts FAD; it reads SL.

Belongs to the FAD-dependent oxidoreductase 2 family. FRD/SDH subfamily. As to quaternary structure, part of an enzyme complex containing four subunits: a flavoprotein, an iron-sulfur, cytochrome b-556, and a hydrophobic anchor protein. The cofactor is FAD.

It is found in the cell inner membrane. The enzyme catalyses a quinone + succinate = fumarate + a quinol. It participates in carbohydrate metabolism; tricarboxylic acid cycle; fumarate from succinate (bacterial route): step 1/1. In terms of biological role, two distinct, membrane-bound, FAD-containing enzymes are responsible for the catalysis of fumarate and succinate interconversion; the fumarate reductase is used in anaerobic growth, and the succinate dehydrogenase is used in aerobic growth. In Salmonella typhimurium (strain LT2 / SGSC1412 / ATCC 700720), this protein is Succinate dehydrogenase flavoprotein subunit (sdhA).